A 137-amino-acid chain; its full sequence is Large ribosomal subunit protein uL16 (137 aa).

Over residues 1-17 (MLQPKRTKFRKTHKGRN) the composition is skewed to basic residues. The tract at residues 1 to 24 (MLQPKRTKFRKTHKGRNRGLANSG) is disordered.

It belongs to the universal ribosomal protein uL16 family. In terms of assembly, part of the 50S ribosomal subunit.

Its function is as follows. Binds 23S rRNA and is also seen to make contacts with the A and possibly P site tRNAs. The protein is Large ribosomal subunit protein uL16 of Aeromonas hydrophila subsp. hydrophila (strain ATCC 7966 / DSM 30187 / BCRC 13018 / CCUG 14551 / JCM 1027 / KCTC 2358 / NCIMB 9240 / NCTC 8049).